A 171-amino-acid chain; its full sequence is LIM domain transcription factor LMO4-B (171 aa).

Over residues 1–19 the composition is skewed to polar residues; sequence MVNNRISESTTTAVSNNGS. A disordered region spans residues 1–20; it reads MVNNRISESTTTAVSNNGSP. 2 consecutive LIM zinc-binding domains span residues 22 to 84 and 86 to 148; these read KACA…LFGN and GACN…GLLN.

Functionally, acts as a positive cofactor of GATA transcription factors to establish the identity of the ventral mesoderm during gastrulation. Down-regulation in the dorsal mesoderm is necessary for the proper formation of this territory since, when present, lmo4 may bind ldb1 and restrict the availability of this cofactor for Spemman organizer transcription factors. At neurula stages, suppresses primary neuron differentiation and modulates gene expression at the Isthmic Organizer of the midbrain-hindbrain boundary. In Xenopus laevis (African clawed frog), this protein is LIM domain transcription factor LMO4-B (lmo4-b).